The sequence spans 700 residues: Leucine zipper putative tumor suppressor 3 (700 aa).

4 disordered regions span residues Met1 to His20, Arg40 to Lys121, Leu133 to Leu188, and Phe202 to Pro344. A compositionally biased stretch (basic and acidic residues) spans Asn109 to Lys121. Residues His203–Thr216 are compositionally biased toward polar residues. 2 stretches are compositionally biased toward low complexity: residues Asp248 to Ser265 and Gly301 to Ser321. The segment covering Gly322 to Gly333 has biased composition (gly residues). Residues Ser343 and Ser345 each carry the phosphoserine modification. 2 coiled-coil regions span residues Ser345–Asp523 and Thr597–Glu666. Residues Arg662–Ile700 form a disordered region. The segment covering His680–Ile700 has biased composition (basic and acidic residues).

The protein belongs to the LZTS3 family. As to quaternary structure, interacts (via C-terminus) with SHANK3 (via PDZ domain). Interacts (via coiled coil) with SIPA1L1. Can form homooligomers.

The protein resides in the synapse. Its subcellular location is the postsynaptic density. It localises to the cell projection. It is found in the dendritic spine. The protein localises to the dendrite. The protein resides in the cytoplasm. Its subcellular location is the cytoskeleton. May be involved in promoting the maturation of dendritic spines, probably via regulating SIPA1L1 levels at the postsynaptic density of synapses. The polypeptide is Leucine zipper putative tumor suppressor 3 (Mus musculus (Mouse)).